Here is an 850-residue protein sequence, read N- to C-terminus: Coiled-coil and C2 domain-containing protein 1B (850 aa).

Over residues 1–10 the composition is skewed to basic residues; it reads MPGPRPRKGP. 3 disordered regions span residues 1–21, 54–73, and 114–145; these read MPGP…ETAK, LTGE…RAPL, and GVDE…EQPV. A compositionally biased stretch (acidic residues) spans 114–129; it reads GVDEETGLVDDSEETS. The stretch at 167–213 forms a coiled coil; sequence LQALLEERIQNYREAAASAKEAGEAAKARRCERGLKTLESQLATVRK. Disordered stretches follow at residues 215–277 and 436–525; these read GKIC…SDPD and FAEL…SPSV. A compositionally biased stretch (basic and acidic residues) spans 234–244; sequence AHQERPSKDSE. Over residues 440–450 the composition is skewed to pro residues; that stretch reads PVPPGFPPIPG. Low complexity-rich tracts occupy residues 489-502 and 511-524; these read PAQA…AQPL and EPKA…LSPS. Position 585 is a phosphoserine (Ser-585). Position 588 is a phosphothreonine (Thr-588). The 140-residue stretch at 668 to 807 folds into the C2 domain; that stretch reads DPPSHHFELK…EKECEIREIM (140 aa).

Interacts with CHMP4B. In terms of tissue distribution, expressed in epididymal sperm but not in testicular sperm (at protein level).

The protein localises to the nucleus. Functionally, transcription factor that binds specifically to the DRE (dual repressor element) and represses HTR1A gene transcription in neuronal cells. This chain is Coiled-coil and C2 domain-containing protein 1B (Cc2d1b), found in Rattus norvegicus (Rat).